A 341-amino-acid chain; its full sequence is Phosphoribosylformylglycinamidine cyclo-ligase (341 aa).

This sequence belongs to the AIR synthase family.

It localises to the cytoplasm. The catalysed reaction is 2-formamido-N(1)-(5-O-phospho-beta-D-ribosyl)acetamidine + ATP = 5-amino-1-(5-phospho-beta-D-ribosyl)imidazole + ADP + phosphate + H(+). It participates in purine metabolism; IMP biosynthesis via de novo pathway; 5-amino-1-(5-phospho-D-ribosyl)imidazole from N(2)-formyl-N(1)-(5-phospho-D-ribosyl)glycinamide: step 2/2. This chain is Phosphoribosylformylglycinamidine cyclo-ligase, found in Caldicellulosiruptor saccharolyticus (strain ATCC 43494 / DSM 8903 / Tp8T 6331).